The chain runs to 1049 residues: Protein phosphatase Slingshot homolog 1 (1049 aa).

Positions 1 to 12 are enriched in polar residues; the sequence is MALVTLQRSPTP. The interval 1 to 28 is disordered; sequence MALVTLQRSPTPSAASSSASNSELEAGS. An N-acetylalanine modification is found at alanine 2. Residues 13-25 show a composition bias toward low complexity; sequence SAASSSASNSELE. 2 positions are modified to phosphoserine: serine 37 and serine 57. Residues 249–304 enclose the DEK-C domain; the sequence is ERTERLIKAKLRSIMMSQDLENVTSKEIRNELEKQMNCNLKELKEFIDNEMLLILG. The Tyrosine-protein phosphatase domain occupies 308–449; it reads KPSLIFDHLY…LSEYEGILDA (142 aa). Catalysis depends on cysteine 393, which acts as the Phosphocysteine intermediate. Positions 456 to 499 are disordered; sequence KLWRQQTDSSLQQPVDDPAGPGDFLPETPDGTPESQLPFLDDAA. A compositionally biased stretch (polar residues) spans 458–468; sequence WRQQTDSSLQQ. Serine 515 is subject to Phosphoserine. Disordered regions lie at residues 544 to 603, 693 to 787, 825 to 899, and 923 to 955; these read AAPP…RWGQ, HLAS…KPAK, HTKE…KSPP, and PTSSSMSSNLTRSSSSDSIHSVRGKPGLVKQRT. Positions 564-573 are enriched in basic and acidic residues; the sequence is CEKDVKKKLE. Serine 576 is subject to Phosphoserine. A compositionally biased stretch (low complexity) spans 731–742; sequence GAALEPPASLLE. The span at 772-787 shows a compositional bias: basic and acidic residues; the sequence is VIKEESSPKKDMKPAK. The residue at position 897 (serine 897) is a Phosphoserine. Residues 897–1049 are interaction with YWHAG; it reads SPPPFFYRLD…LKSPSWMSKS (153 aa). Residues 925–943 show a composition bias toward low complexity; it reads SSSMSSNLTRSSSSDSIHS. Serine 978 bears the Phosphoserine mark. The interval 989–1049 is disordered; the sequence is TEDLSSEADP…LKSPSWMSKS (61 aa). The span at 1001–1013 shows a compositional bias: polar residues; the sequence is VADSQDTTLSESS.

It belongs to the protein-tyrosine phosphatase family. As to quaternary structure, interacts with actin and this stimulates phosphatase activity. Also interacts with LIMK1 and with the 14-3-3 proteins YWHAB, YWHAG, YWHAQ, and YWHAZ. Interaction with 14-3-3 proteins inhibits phosphatase activity and also blocks recruitment to lamellipodia and stimulation by actin. Post-translationally, phosphorylated. Inhibitory phosphorylation by PAK4 promotes binding to YWHAZ. Phosphorylation at Ser-978 is decreased by stimuli which promote actin reorganization and lamellipodia formation. Can be dephosphorylated and activated by PPP3CA/calcineurin A. Phosphorylation decreases immediately prior to telophase.

Its subcellular location is the cytoplasm. The protein resides in the cytoskeleton. It is found in the cell projection. It localises to the lamellipodium. The protein localises to the cleavage furrow. Its subcellular location is the midbody. The enzyme catalyses O-phospho-L-tyrosyl-[protein] + H2O = L-tyrosyl-[protein] + phosphate. It catalyses the reaction O-phospho-L-seryl-[protein] + H2O = L-seryl-[protein] + phosphate. It carries out the reaction O-phospho-L-threonyl-[protein] + H2O = L-threonyl-[protein] + phosphate. Its function is as follows. Protein phosphatase which regulates actin filament dynamics. Dephosphorylates and activates the actin binding/depolymerizing factor cofilin, which subsequently binds to actin filaments and stimulates their disassembly. Inhibitory phosphorylation of cofilin is mediated by LIMK1, which may also be dephosphorylated and inactivated by this protein. The sequence is that of Protein phosphatase Slingshot homolog 1 from Homo sapiens (Human).